Consider the following 261-residue polypeptide: Glucose 1-dehydrogenase 4 (261 aa).

Residue 11 to 35 coordinates NAD(+); sequence VITGGSTGLGRAMAVRFGQEEAKVV. Ser-145 contributes to the substrate binding site. The active-site Proton acceptor is Tyr-158.

The protein belongs to the short-chain dehydrogenases/reductases (SDR) family. Homotetramer.

The catalysed reaction is D-glucose + NAD(+) = D-glucono-1,5-lactone + NADH + H(+). The enzyme catalyses D-glucose + NADP(+) = D-glucono-1,5-lactone + NADPH + H(+). This Priestia megaterium (Bacillus megaterium) protein is Glucose 1-dehydrogenase 4 (gdhIV).